We begin with the raw amino-acid sequence, 99 residues long: UPF0235 protein Avin_03050 (99 aa).

The segment at 66–99 is disordered; that stretch reads VSLESGESNRQKRVRIRRPRQLPALPGLAPRPDA. The segment covering 76-85 has biased composition (basic residues); that stretch reads QKRVRIRRPR.

Belongs to the UPF0235 family.

This Azotobacter vinelandii (strain DJ / ATCC BAA-1303) protein is UPF0235 protein Avin_03050.